The following is a 243-amino-acid chain: Ubiquinone/menaquinone biosynthesis C-methyltransferase UbiE (243 aa).

S-adenosyl-L-methionine is bound by residues Thr-69, Asp-90, and 116-117; that span reads DA.

It belongs to the class I-like SAM-binding methyltransferase superfamily. MenG/UbiE family.

The catalysed reaction is a 2-demethylmenaquinol + S-adenosyl-L-methionine = a menaquinol + S-adenosyl-L-homocysteine + H(+). It catalyses the reaction a 2-methoxy-6-(all-trans-polyprenyl)benzene-1,4-diol + S-adenosyl-L-methionine = a 5-methoxy-2-methyl-3-(all-trans-polyprenyl)benzene-1,4-diol + S-adenosyl-L-homocysteine + H(+). It participates in quinol/quinone metabolism; menaquinone biosynthesis; menaquinol from 1,4-dihydroxy-2-naphthoate: step 2/2. Its pathway is cofactor biosynthesis; ubiquinone biosynthesis. Functionally, methyltransferase required for the conversion of demethylmenaquinol (DMKH2) to menaquinol (MKH2) and the conversion of 2-polyprenyl-6-methoxy-1,4-benzoquinol (DDMQH2) to 2-polyprenyl-3-methyl-6-methoxy-1,4-benzoquinol (DMQH2). This chain is Ubiquinone/menaquinone biosynthesis C-methyltransferase UbiE, found in Cupriavidus necator (strain ATCC 17699 / DSM 428 / KCTC 22496 / NCIMB 10442 / H16 / Stanier 337) (Ralstonia eutropha).